Here is a 1427-residue protein sequence, read N- to C-terminus: Protein expanded (1427 aa).

One can recognise an FERM domain in the interval Arg-26–Ala-399. The interval Gly-176–Lys-212 is disordered. Residues Glu-192–Pro-211 show a composition bias toward polar residues. Phosphotyrosine occurs at positions 227 and 423. Disordered regions lie at residues Val-520–Gln-566 and Asn-611–Tyr-656. Over residues Asp-524–Gly-544 the composition is skewed to polar residues. Low complexity predominate over residues Thr-545–Ser-559. Tyr-679 carries the post-translational modification Phosphotyrosine. Residues Glu-688 to Ser-710 show a composition bias toward basic and acidic residues. 5 disordered regions span residues Glu-688–His-732, Tyr-766–Arg-792, Ala-815–Ser-880, His-939–Ser-963, and Leu-1000–Leu-1022. A Phosphotyrosine modification is found at Tyr-766. The span at Pro-818–Ala-838 shows a compositional bias: pro residues. An RXPPXY motif motif is present at residues Arg-842–Tyr-847. Over residues Ser-848 to Ile-859 the composition is skewed to polar residues. Low complexity predominate over residues Ser-860 to Ser-877. Residues Leu-951–Ser-963 show a composition bias toward basic residues. Pro residues predominate over residues Ala-1001–His-1019. The short motif at Pro-1008–Pro-1020 is the SH3-binding element. Tyr-1103 carries the post-translational modification Phosphotyrosine. Residues Pro-1149–Pro-1157 carry the SH3-binding motif. Ser-1181 is modified (phosphoserine). Disordered regions lie at residues Asp-1190–Glu-1267 and Thr-1345–Gln-1398. Composition is skewed to pro residues over residues Pro-1214–Pro-1230 and Pro-1237–Leu-1246. 2 stretches are compositionally biased toward polar residues: residues Ser-1253 to Ala-1262 and Thr-1345 to Gly-1370. Residues Lys-1376–Pro-1388 are compositionally biased toward basic residues.

Forms a complex with Kibra and Mer. Interacts (via RXPPXY motif) with Kibra (via domain WW 1). Interacts with Mer and Hpo (via SARAH domain). Interacts with Schip1; the interaction results in recruitment of Schip1 to the apical cell membrane. Interacts with ack and yki. In terms of processing, phosphorylated by Ack at several tyrosines including Tyr-227, Tyr-423, Tyr-679, Tyr-766 and Tyr-1103.

Its subcellular location is the apical cell membrane. In terms of biological role, activates the Hippo/SWH (Sav/Wts/Hpo) signaling pathway, a signaling pathway that plays a pivotal role in organ size control and tumor suppression by restricting proliferation and promoting apoptosis. The core of this pathway is composed of a kinase cascade wherein Hippo (Hpo), in complex with its regulatory protein Salvador (Sav), phosphorylates and activates Warts (Wts) in complex with its regulatory protein Mats, which in turn phosphorylates and inactivates the Yorkie (Yki) oncoprotein. Ex acts synergistically along with Mer and Kibra to regulate the Hippo signaling pathway. Involved in the control of cell proliferation in imaginal disks. May bind to certain proteins of signal transduction pathways by interaction with their SH3 domains. Required for apical localization of Schip1. The chain is Protein expanded (ex) from Drosophila melanogaster (Fruit fly).